The sequence spans 1012 residues: Ankyrin repeat- and BTB/POZ domain-containing protein 3-B (1012 aa).

The chain crosses the membrane as a helical span at residues 160–180 (ILSWTISVNCIAASLSALSMY). ANK repeat units follow at residues 511-540 (QGMT…DINS), 557-586 (RQAT…NVEG), and 595-624 (YTET…DPMI). The BTB domain occupies 831-897 (SDVTFLVEGK…LYCGGTDALH (67 aa)).

It localises to the membrane. The chain is Ankyrin repeat- and BTB/POZ domain-containing protein 3-B (abtb3b) from Danio rerio (Zebrafish).